Here is a 2575-residue protein sequence, read N- to C-terminus: Non-reducing polyketide synthase pks11 (2575 aa).

The 140-residue stretch at 89 to 228 (LANIILSPLV…ASKTVSTLQG (140 aa)) folds into the Starter acyltransferase (SAT) domain. Cys129 (nucleophile; for transacylase activity) is an active-site residue. His247 acts as the Proton donor/acceptor; for transacylase activity in catalysis. The 418-residue stretch at 373–790 (EDDIAVVGMS…GSNASAVVTE (418 aa)) folds into the Ketosynthase family 3 (KS3) domain. Catalysis depends on for beta-ketoacyl synthase activity residues Cys538, His673, and His713. The Malonyl-CoA:ACP transacylase (MAT) domain maps to 901-1192 (FGGQISTYVG…TNMASRALGS (292 aa)). The interval 1276–1409 (PKGLWSFIDY…GQIIFVSTDN (134 aa)) is N-terminal hotdog fold. A PKS/mFAS DH domain is found at 1276 to 1586 (PKGLWSFIDY…YHKVAKATMS (311 aa)). The tract at residues 1307-1584 (LVSGHIIAQT…VNYHKVAKAT (278 aa)) is product template (PT) domain. His1311 serves as the catalytic Proton acceptor; for dehydratase activity. Positions 1437-1586 (ADDIIQGRNI…YHKVAKATMS (150 aa)) are C-terminal hotdog fold. The Proton donor; for dehydratase activity role is filled by Asp1493. Residues 1597 to 1606 (TTSTSTNVKS) show a composition bias toward polar residues. The interval 1597 to 1636 (TTSTSTNVKSSPAAAEGSSPVENGASGSGSKAKKTKSGAG) is disordered. The Carrier domain maps to 1637-1711 (QDVVNKTKGL…GLVQIIKSTL (75 aa)). An O-(pantetheine 4'-phosphoryl)serine modification is found at Ser1671. A disordered region spans residues 1713 to 1762 (VSDDEEGSDQEGSEASSSESSTTFTPSTTATTVSDVEDNGNEKSIGKEKS). Positions 1714–1724 (SDDEEGSDQEG) are enriched in acidic residues. Over residues 1725–1746 (SEASSSESSTTFTPSTTATTVS) the composition is skewed to low complexity. Over residues 1752–1762 (GNEKSIGKEKS) the composition is skewed to basic and acidic residues. The tract at residues 1835–2130 (LTRIPHDPQH…HIDWTDGNSP (296 aa)) is methyltransferase domain. The region spanning 2204–2448 (ITGATGSLGS…LCWTPVDDVA (245 aa)) is the Thioester reductase (TE) domain.

The cofactor is pantetheine 4'-phosphate.

Its pathway is secondary metabolite biosynthesis. Non-reducing polyketide synthase; part of the gene cluster that mediates the biosynthesis of mitorubrinol and mitorubrinic acid, two virulence factors that improve T.marneffei intracellular survival in macrophages. The two polyketide synthases pks12 and pks11 are probably responsible for sequential use in the biosynthesis of mitorubrinol and mitorubrinic acid. The first part of the biosynthesis is probably catalyzed by pks12, which synthesized orsellinic acid. This tetraketide is then used as a starter unit for pks11, which possesses a SAT domain, in the second part of the biosynthesis. Pks11, contains a methyltransferase domain, also served that methylates the products, using a methyl group from S-adenosylmethionine. This chain is Non-reducing polyketide synthase pks11, found in Talaromyces marneffei (Penicillium marneffei).